Here is a 279-residue protein sequence, read N- to C-terminus: Universal stress protein MT2087 (279 aa).

Belongs to the universal stress protein A family.

This Mycobacterium tuberculosis (strain CDC 1551 / Oshkosh) protein is Universal stress protein MT2087.